The sequence spans 314 residues: Olfactory receptor 5P6 (314 aa).

Topologically, residues 1–28 are extracellular; it reads MAFQEDGNHTAVTEFVLFGLTDDPVLRV. An N-linked (GlcNAc...) asparagine glycan is attached at asparagine 8. The helical transmembrane segment at 29–49 threads the bilayer; that stretch reads ILFIIFLCIYLVTVSGNLSTI. Over 50–57 the chain is Cytoplasmic; it reads LLIRVSSQ. The chain crosses the membrane as a helical span at residues 58-78; it reads LHHPMYFFLSHLAFADIGYSS. Residues 79–102 lie on the Extracellular side of the membrane; that stretch reads SVTPNMLVNFLVERHTISYIGCAI. Cysteine 100 and cysteine 192 are disulfide-bonded. The helical transmembrane segment at 103-123 threads the bilayer; the sequence is QLGSVVFFGSSECFILAAMAY. Over 124–136 the chain is Cytoplasmic; it reads DRFMAICNPLLYS. The chain crosses the membrane as a helical span at residues 137 to 157; it reads TKMSTQVCVQLLLIAYIGGFL. The Extracellular segment spans residues 158-199; that stretch reads NTWSFTICFYSLVFCGPNGVNHFFCDFAPLIELSCSDVSVPA. A helical transmembrane segment spans residues 200–220; sequence TVPSFTAGSIIVVTVIVIAIS. The Cytoplasmic segment spans residues 221 to 240; it reads YIYILITILKMHSTEGRQKA. A helical transmembrane segment spans residues 241–261; that stretch reads FSTCTSHLTAVTLFYGTITFI. Residues 262 to 274 are Extracellular-facing; the sequence is YVMPKSSFSTDQN. The chain crosses the membrane as a helical span at residues 275–295; the sequence is KVVSVFYMVVIPMLNPLIYSL. Residues 296 to 314 are Cytoplasmic-facing; that stretch reads RNNEIKGALKRQIGRKIFS.

This sequence belongs to the G-protein coupled receptor 1 family.

It localises to the cell membrane. Potential odorant receptor. This is Olfactory receptor 5P6 from Mus musculus (Mouse).